Reading from the N-terminus, the 416-residue chain is Serine hydroxymethyltransferase (416 aa).

(6S)-5,6,7,8-tetrahydrofolate is bound by residues Leu-118 and 122-124; that span reads GHL. At Lys-226 the chain carries N6-(pyridoxal phosphate)lysine. (6S)-5,6,7,8-tetrahydrofolate-binding positions include Glu-242 and 350–352; that span reads SPF.

Belongs to the SHMT family. In terms of assembly, homodimer. It depends on pyridoxal 5'-phosphate as a cofactor.

The protein resides in the cytoplasm. The enzyme catalyses (6R)-5,10-methylene-5,6,7,8-tetrahydrofolate + glycine + H2O = (6S)-5,6,7,8-tetrahydrofolate + L-serine. It functions in the pathway one-carbon metabolism; tetrahydrofolate interconversion. It participates in amino-acid biosynthesis; glycine biosynthesis; glycine from L-serine: step 1/1. Functionally, catalyzes the reversible interconversion of serine and glycine with tetrahydrofolate (THF) serving as the one-carbon carrier. This reaction serves as the major source of one-carbon groups required for the biosynthesis of purines, thymidylate, methionine, and other important biomolecules. Also exhibits THF-independent aldolase activity toward beta-hydroxyamino acids, producing glycine and aldehydes, via a retro-aldol mechanism. In Helicobacter pylori (strain ATCC 700392 / 26695) (Campylobacter pylori), this protein is Serine hydroxymethyltransferase.